Here is a 264-residue protein sequence, read N- to C-terminus: Thiazole synthase (264 aa).

Lys98 (schiff-base intermediate with DXP) is an active-site residue. Residues Gly159, 185 to 186 (AG), and 207 to 208 (AS) each bind 1-deoxy-D-xylulose 5-phosphate. The tract at residues 243 to 264 (HFAEASSPPEGRAHLDPERPAF) is disordered. Positions 253 to 264 (GRAHLDPERPAF) are enriched in basic and acidic residues.

This sequence belongs to the ThiG family. In terms of assembly, homotetramer. Forms heterodimers with either ThiH or ThiS.

The protein localises to the cytoplasm. The catalysed reaction is [ThiS sulfur-carrier protein]-C-terminal-Gly-aminoethanethioate + 2-iminoacetate + 1-deoxy-D-xylulose 5-phosphate = [ThiS sulfur-carrier protein]-C-terminal Gly-Gly + 2-[(2R,5Z)-2-carboxy-4-methylthiazol-5(2H)-ylidene]ethyl phosphate + 2 H2O + H(+). It participates in cofactor biosynthesis; thiamine diphosphate biosynthesis. Its function is as follows. Catalyzes the rearrangement of 1-deoxy-D-xylulose 5-phosphate (DXP) to produce the thiazole phosphate moiety of thiamine. Sulfur is provided by the thiocarboxylate moiety of the carrier protein ThiS. In vitro, sulfur can be provided by H(2)S. This Streptomyces avermitilis (strain ATCC 31267 / DSM 46492 / JCM 5070 / NBRC 14893 / NCIMB 12804 / NRRL 8165 / MA-4680) protein is Thiazole synthase.